Reading from the N-terminus, the 315-residue chain is 4-carboxy-2-hydroxymuconate-6-semialdehyde dehydrogenase (315 aa).

It belongs to the Gfo/Idh/MocA family. In terms of assembly, homodimer.

It catalyses the reaction 4-carboxy-2-hydroxymuconate semialdehyde hemiacetal + NADP(+) = 2-oxo-2H-pyran-4,6-dicarboxylate + NADPH + H(+). Its pathway is secondary metabolite metabolism; lignin degradation. Its activity is regulated as follows. Inhibited by p-chloromercuribenzoate (10 mM), HgCl2 (10 mM), or 5,5-dithiobis(2-nitrobenzoate) (100 mM). Its function is as follows. Involved in the degradation of protocatechuate (PCA) via the PCA 4,5-cleavage pathway. Catalyzes the oxidation of the hemiacetal form of 4-carboxy-2-hydroxymuconate-6-semialdehyde (CHMS) to produce 2-pyrone-4,6-dicarboxylate (PDC). LigC has 10-times-higher affinity to NADP than to NAD. The sequence is that of 4-carboxy-2-hydroxymuconate-6-semialdehyde dehydrogenase (ligC) from Sphingobium sp. (strain NBRC 103272 / SYK-6).